The chain runs to 566 residues: Putative ABC transporter ATP-binding protein BC_2655 (566 aa).

2 ABC transporter domains span residues 5 to 246 (ISFE…GLRE) and 300 to 533 (LKVE…ANLR). ATP-binding positions include 39-46 (GRSGSGKS) and 333-340 (GHNGAGKS).

Belongs to the ABC transporter superfamily.

The protein resides in the cell membrane. Functionally, probably part of an ABC transporter complex. Responsible for energy coupling to the transport system. The polypeptide is Putative ABC transporter ATP-binding protein BC_2655 (Bacillus cereus (strain ATCC 14579 / DSM 31 / CCUG 7414 / JCM 2152 / NBRC 15305 / NCIMB 9373 / NCTC 2599 / NRRL B-3711)).